A 126-amino-acid chain; its full sequence is Glycine cleavage system H protein (126 aa).

Positions 22-104 constitute a Lipoyl-binding domain; sequence IAYVGITDYA…YGKGWLIKIK (83 aa). At Lys-63 the chain carries N6-lipoyllysine.

The protein belongs to the GcvH family. In terms of assembly, the glycine cleavage system is composed of four proteins: P, T, L and H. (R)-lipoate is required as a cofactor.

Functionally, the glycine cleavage system catalyzes the degradation of glycine. The H protein shuttles the methylamine group of glycine from the P protein to the T protein. In Phocaeicola vulgatus (strain ATCC 8482 / DSM 1447 / JCM 5826 / CCUG 4940 / NBRC 14291 / NCTC 11154) (Bacteroides vulgatus), this protein is Glycine cleavage system H protein.